The primary structure comprises 22 residues: Antimicrobial peptide 5 (22 aa).

L22 carries the leucine amide modification.

As to expression, skin.

Its subcellular location is the secreted. Its function is as follows. Has very strong antimicrobial activity against Gram-positive bacterium S.aureus, Gram-negative bacterium E.coli and yeast C.albicans. Has strong hemolytic activity against human red blood cells. This Xenopus tropicalis (Western clawed frog) protein is Antimicrobial peptide 5.